The chain runs to 843 residues: Potassium transporter 10 (843 aa).

Positions 1-15 (MKSPSPVDPESPSSP) are enriched in low complexity. Residues 1–25 (MKSPSPVDPESPSSPDCKGGSSSKR) form a disordered region. The Cytoplasmic segment spans residues 1–34 (MKSPSPVDPESPSSPDCKGGSSSKRRRLPWRMTM). A helical transmembrane segment spans residues 35–55 (SLAYQSLGVVYGDLSTSPLYV). Residues 56–72 (YKAAFAEDIQHSETNEE) are Vacuolar-facing. The chain crosses the membrane as a helical span at residues 73–93 (ILGVLSFVFWTLTLVPLLKYV). Residues 94–183 (CVVLRADDNG…LLERHKVLQR (90 aa)) are Cytoplasmic-facing. The chain crosses the membrane as a helical span at residues 184–204 (VLLVLALVGTCMVIGDGVLTP). At 205–225 (AISVFSAVSGLELSMEKHQHK) the chain is on the vacuolar side. Residues 226–246 (YVEVPIACFVLVCLFCLQHYG) traverse the membrane as a helical segment. The Cytoplasmic segment spans residues 247-249 (THR). A helical transmembrane segment spans residues 250-270 (VGFLFAPIVITWLLCISMIGV). Topologically, residues 271 to 298 (YNIVHWEPNVYRALSPYYMYKFLKKTQR) are vacuolar. A helical transmembrane segment spans residues 299 to 319 (GGWMSLGGILLCITGSEAMFA). Over 320–326 (DLGHFNQ) the chain is Cytoplasmic. Residues 327–347 (LSIQIAFTCMVYPSLILAYMG) traverse the membrane as a helical segment. The Vacuolar segment spans residues 348-377 (QAAYLCKHHIIESDYRIGFYVSVPEKIRWP). A helical transmembrane segment spans residues 378–398 (VLAIAILAAVVGSQAVITGTF). Over 399-425 (SMIKQCTALGCFPRVKIVHTSDKVHGQ) the chain is Cytoplasmic. Residues 426–446 (IYIPEINWILMILCLAITIGF) traverse the membrane as a helical segment. Residues 447 to 451 (RDTKH) are Vacuolar-facing. The chain crosses the membrane as a helical span at residues 452–472 (LGNASGLAVITVMLVTTCLMS). The Cytoplasmic portion of the chain corresponds to 473–482 (LVIVLCWHKS). A helical transmembrane segment spans residues 483-505 (IFLAFGFIIFFGTIEALYFSASL). Over 506–510 (IKFRE) the chain is Vacuolar. A helical membrane pass occupies residues 511 to 531 (GAWVPIVLAFIFMAIMCIWHY). At 532 to 843 (GTIKKYEFDL…TLEVGMIYYV (312 aa)) the chain is on the cytoplasmic side. Residues 667 to 747 (AASSKPKNVC…IMSPSPSPPP (81 aa)) are disordered. Positions 718–735 (GGSGSGSGRGSSRGGGGA) are enriched in gly residues.

Belongs to the HAK/KUP transporter (TC 2.A.72.3) family. As to expression, expressed in roots, shoots, and panicle at flowering stage.

The protein localises to the vacuole membrane. In terms of biological role, high-affinity potassium transporter. This Oryza sativa subsp. japonica (Rice) protein is Potassium transporter 10 (HAK10).